A 186-amino-acid polypeptide reads, in one-letter code: Large ribosomal subunit protein uL10 (186 aa).

In terms of assembly, part of the ribosomal stalk of the 50S ribosomal subunit. The N-terminus interacts with L11 and the large rRNA to form the base of the stalk. The C-terminus forms an elongated spine to which L12 dimers bind in a sequential fashion forming a multimeric L10(L12)X complex.

Its function is as follows. Forms part of the ribosomal stalk, playing a central role in the interaction of the ribosome with GTP-bound translation factors. This chain is Large ribosomal subunit protein uL10, found in Rhodopseudomonas palustris (strain ATCC BAA-98 / CGA009).